The primary structure comprises 448 residues: Signal recognition particle protein (448 aa).

GTP is bound by residues 101 to 108 (GLQGSGKT), 182 to 186 (DSAGR), and 240 to 243 (SKFD).

It belongs to the GTP-binding SRP family. SRP54 subfamily. As to quaternary structure, part of the signal recognition particle protein translocation system, which is composed of SRP and FtsY. SRP is a ribonucleoprotein composed of Ffh and a 4.5S RNA molecule.

It localises to the cytoplasm. The catalysed reaction is GTP + H2O = GDP + phosphate + H(+). Functionally, involved in targeting and insertion of nascent membrane proteins into the cytoplasmic membrane. Binds to the hydrophobic signal sequence of the ribosome-nascent chain (RNC) as it emerges from the ribosomes. The SRP-RNC complex is then targeted to the cytoplasmic membrane where it interacts with the SRP receptor FtsY. Interaction with FtsY leads to the transfer of the RNC complex to the Sec translocase for insertion into the membrane, the hydrolysis of GTP by both Ffh and FtsY, and the dissociation of the SRP-FtsY complex into the individual components. The chain is Signal recognition particle protein from Helicobacter pylori (strain ATCC 700392 / 26695) (Campylobacter pylori).